A 181-amino-acid polypeptide reads, in one-letter code: MSSLLQGVNLYLIGMMGVGKTTVGPLLAKHLGYGFLDLDGVIAKATDKSINQLFAEEGEAGFRQIESDVLSQVCAFTKLTIATGGGIVLRRENWGYLHHGLIVWLDVPVELIYRRLAEDTTRPLLQDADLKGKLRSLLEQRTPLYSQADLHITVQEGETPEDIANRIIEVIPNVLKPQASH.

An ATP-binding site is contributed by 17–22; that stretch reads GVGKTT. Position 21 (Thr-21) interacts with Mg(2+). Positions 39, 63, and 85 each coordinate substrate. Arg-122 is an ATP binding site. A substrate-binding site is contributed by Arg-141.

This sequence belongs to the shikimate kinase family. As to quaternary structure, monomer. Mg(2+) serves as cofactor.

The protein resides in the cytoplasm. The catalysed reaction is shikimate + ATP = 3-phosphoshikimate + ADP + H(+). It participates in metabolic intermediate biosynthesis; chorismate biosynthesis; chorismate from D-erythrose 4-phosphate and phosphoenolpyruvate: step 5/7. In terms of biological role, catalyzes the specific phosphorylation of the 3-hydroxyl group of shikimic acid using ATP as a cosubstrate. This Nostoc punctiforme (strain ATCC 29133 / PCC 73102) protein is Shikimate kinase.